The primary structure comprises 347 residues: Holliday junction branch migration complex subunit RuvB (347 aa).

The tract at residues 1–186 (MKDENSINFL…FGITARFELY (186 aa)) is large ATPase domain (RuvB-L). ATP contacts are provided by residues Leu-25, Arg-26, Gly-67, Lys-70, Thr-71, Thr-72, 133–135 (EDY), Arg-176, Tyr-186, and Arg-223. Thr-71 contacts Mg(2+). Residues 187–257 (SEIELVEIIK…IVAIGLEMLR (71 aa)) form a small ATPAse domain (RuvB-S) region. The segment at 260-347 (GEGLDEQDRN…NLNENQRVSF (88 aa)) is head domain (RuvB-H). Arg-315 and Arg-320 together coordinate DNA.

This sequence belongs to the RuvB family. In terms of assembly, homohexamer. Forms an RuvA(8)-RuvB(12)-Holliday junction (HJ) complex. HJ DNA is sandwiched between 2 RuvA tetramers; dsDNA enters through RuvA and exits via RuvB. An RuvB hexamer assembles on each DNA strand where it exits the tetramer. Each RuvB hexamer is contacted by two RuvA subunits (via domain III) on 2 adjacent RuvB subunits; this complex drives branch migration. In the full resolvosome a probable DNA-RuvA(4)-RuvB(12)-RuvC(2) complex forms which resolves the HJ.

Its subcellular location is the cytoplasm. It catalyses the reaction ATP + H2O = ADP + phosphate + H(+). Functionally, the RuvA-RuvB-RuvC complex processes Holliday junction (HJ) DNA during genetic recombination and DNA repair, while the RuvA-RuvB complex plays an important role in the rescue of blocked DNA replication forks via replication fork reversal (RFR). RuvA specifically binds to HJ cruciform DNA, conferring on it an open structure. The RuvB hexamer acts as an ATP-dependent pump, pulling dsDNA into and through the RuvAB complex. RuvB forms 2 homohexamers on either side of HJ DNA bound by 1 or 2 RuvA tetramers; 4 subunits per hexamer contact DNA at a time. Coordinated motions by a converter formed by DNA-disengaged RuvB subunits stimulates ATP hydrolysis and nucleotide exchange. Immobilization of the converter enables RuvB to convert the ATP-contained energy into a lever motion, pulling 2 nucleotides of DNA out of the RuvA tetramer per ATP hydrolyzed, thus driving DNA branch migration. The RuvB motors rotate together with the DNA substrate, which together with the progressing nucleotide cycle form the mechanistic basis for DNA recombination by continuous HJ branch migration. Branch migration allows RuvC to scan DNA until it finds its consensus sequence, where it cleaves and resolves cruciform DNA. This is Holliday junction branch migration complex subunit RuvB from Borreliella afzelii (strain PKo) (Borrelia afzelii).